The primary structure comprises 261 residues: MSLPASFDLTPEDAKLLLAGNVHLGSKNVQVHNKPYVYKTRPDGVNIINIGKTWEKIVLAARIIAAIPNANDVAVCSSRTFGQRAVLKFAAHTGATAIAGRFTPGNFTNYITRSFKEPRLVIVTDPRTDAQAIKESSYVNIPVIALTDMDSPSEYVDVAIPCNNKGKHSIGLIWWLLAREVLRSRGIIPDRTTEWSVMPDLYFYRDPEEIEQNAAEEAKAEETEEAPAAEAETEWTGETDDVDWADSGATPAAEDAAASNW.

Serine 2 bears the N-acetylserine mark. Residues glutamine 212 to tryptophan 261 form a disordered region. The span at glutamate 222–tryptophan 244 shows a compositional bias: acidic residues.

Belongs to the universal ribosomal protein uS2 family. As to quaternary structure, component of the small ribosomal subunit. Mature ribosomes consist of a small (40S) and a large (60S) subunit. The 40S subunit contains about 33 different proteins and 1 molecule of RNA (18S). The 60S subunit contains about 49 different proteins and 3 molecules of RNA (25S, 5.8S and 5S). Interacts with RPS21.

The protein localises to the cytoplasm. Its function is as follows. Required for the assembly and/or stability of the 40S ribosomal subunit. Required for the processing of the 20S rRNA-precursor to mature 18S rRNA in a late step of the maturation of 40S ribosomal subunits. In Candida tropicalis (Yeast), this protein is Small ribosomal subunit protein uS2.